The sequence spans 257 residues: Phycoerythrobilin:ferredoxin oxidoreductase (257 aa).

The protein belongs to the HY2 family.

It catalyses the reaction (3Z)-phycoerythrobilin + oxidized 2[4Fe-4S]-[ferredoxin] = 15,16-dihydrobiliverdin + reduced 2[4Fe-4S]-[ferredoxin] + 2 H(+). Catalyzes the two-electron reduction of the C2 and C3(1) diene system of 15,16-dihydrobiliverdin. The sequence is that of Phycoerythrobilin:ferredoxin oxidoreductase from Synechococcus sp. (strain CC9311).